The primary structure comprises 216 residues: Protein-L-isoaspartate O-methyltransferase (216 aa).

Ser-61 is an active-site residue.

It belongs to the methyltransferase superfamily. L-isoaspartyl/D-aspartyl protein methyltransferase family.

It localises to the cytoplasm. The catalysed reaction is [protein]-L-isoaspartate + S-adenosyl-L-methionine = [protein]-L-isoaspartate alpha-methyl ester + S-adenosyl-L-homocysteine. In terms of biological role, catalyzes the methyl esterification of L-isoaspartyl residues in peptides and proteins that result from spontaneous decomposition of normal L-aspartyl and L-asparaginyl residues. It plays a role in the repair and/or degradation of damaged proteins. The sequence is that of Protein-L-isoaspartate O-methyltransferase from Dinoroseobacter shibae (strain DSM 16493 / NCIMB 14021 / DFL 12).